A 126-amino-acid polypeptide reads, in one-letter code: Protein ApaG (126 aa).

The region spanning 2-126 (SALDTSIRVE…FRLATPGLLH (125 aa)) is the ApaG domain.

This Shewanella sp. (strain W3-18-1) protein is Protein ApaG.